A 244-amino-acid chain; its full sequence is Carboxy-S-adenosyl-L-methionine synthase (244 aa).

Residues tyrosine 40, 65 to 67 (GCS), 90 to 91 (DN), 119 to 120 (DI), asparagine 134, and arginine 201 contribute to the S-adenosyl-L-methionine site.

This sequence belongs to the class I-like SAM-binding methyltransferase superfamily. Cx-SAM synthase family. Homodimer.

It catalyses the reaction prephenate + S-adenosyl-L-methionine = carboxy-S-adenosyl-L-methionine + 3-phenylpyruvate + H2O. Its function is as follows. Catalyzes the conversion of S-adenosyl-L-methionine (SAM) to carboxy-S-adenosyl-L-methionine (Cx-SAM). The polypeptide is Carboxy-S-adenosyl-L-methionine synthase (Geobacter sp. (strain M21)).